Consider the following 133-residue polypeptide: ATP synthase epsilon chain (133 aa).

Belongs to the ATPase epsilon chain family. In terms of assembly, F-type ATPases have 2 components, CF(1) - the catalytic core - and CF(0) - the membrane proton channel. CF(1) has five subunits: alpha(3), beta(3), gamma(1), delta(1), epsilon(1). CF(0) has three main subunits: a, b and c.

The protein resides in the cell membrane. Functionally, produces ATP from ADP in the presence of a proton gradient across the membrane. The chain is ATP synthase epsilon chain (atpC) from Mycoplasma pneumoniae (strain ATCC 29342 / M129 / Subtype 1) (Mycoplasmoides pneumoniae).